We begin with the raw amino-acid sequence, 540 residues long: Coatomer subunit delta (540 aa).

Residues 169 to 263 form a disordered region; the sequence is RHEEMLRGKR…GMILGGKSGT (95 aa). Residues 179–197 show a composition bias toward gly residues; the sequence is SGGYTGISGGGGMGSGGMG. Over residues 212-229 the composition is skewed to low complexity; it reads NNNNNNNNNNNNNNNNNN. A compositionally biased stretch (polar residues) spans 238–250; it reads SPNTSRPSAASSG. Over residues 251–261 the composition is skewed to gly residues; the sequence is SQGGMILGGKS. One can recognise an MHD domain in the interval 304–540; sequence QEGVHITVEE…TLSVDTYEIK (237 aa).

It belongs to the adaptor complexes medium subunit family. Delta-COP subfamily. Oligomeric complex that consists of at least the alpha, beta, beta', gamma, delta, epsilon and zeta subunits.

Its subcellular location is the cytoplasm. The protein localises to the golgi apparatus membrane. It localises to the cytoplasmic vesicle. It is found in the COPI-coated vesicle membrane. Functionally, the coatomer is a cytosolic protein complex that binds to dilysine motifs and reversibly associates with Golgi non-clathrin-coated vesicles, which further mediate biosynthetic protein transport from the ER, via the Golgi up to the trans Golgi network. Coatomer complex is required for budding from Golgi membranes, and is essential for the retrograde Golgi-to-ER transport of dilysine-tagged proteins. In Dictyostelium discoideum (Social amoeba), this protein is Coatomer subunit delta (copd).